A 105-amino-acid chain; its full sequence is uncharacterized protein (105 aa).

Over residues 1-11 (MPHRNDRRKSA) the composition is skewed to basic residues. The segment at 1–20 (MPHRNDRRKSASKAPNAIIH) is disordered.

This sequence belongs to the ALB1 family.

The protein resides in the nucleus. It localises to the nucleolus. This is an uncharacterized protein from Schizosaccharomyces pombe (strain 972 / ATCC 24843) (Fission yeast).